A 127-amino-acid chain; its full sequence is Large ribosomal subunit protein bL12 (127 aa).

The disordered stretch occupies residues 98 to 127 (PKPIKEGAPKAEAESLKSKLEEAGAEVELK).

The protein belongs to the bacterial ribosomal protein bL12 family. Homodimer. Part of the ribosomal stalk of the 50S ribosomal subunit. Forms a multimeric L10(L12)X complex, where L10 forms an elongated spine to which 2 to 4 L12 dimers bind in a sequential fashion. Binds GTP-bound translation factors.

In terms of biological role, forms part of the ribosomal stalk which helps the ribosome interact with GTP-bound translation factors. Is thus essential for accurate translation. In Amoebophilus asiaticus (strain 5a2), this protein is Large ribosomal subunit protein bL12.